The primary structure comprises 266 residues: Small ribosomal subunit protein eS1 (266 aa).

Residues 236–266 (GAGTAAKATGDDTGAKVERADGYEPPIQESV) form a disordered region. Over residues 244–257 (TGDDTGAKVERADG) the composition is skewed to basic and acidic residues.

It belongs to the eukaryotic ribosomal protein eS1 family. As to quaternary structure, component of the small ribosomal subunit. Mature ribosomes consist of a small (40S) and a large (60S) subunit. The 40S subunit contains about 33 different proteins and 1 molecule of RNA (18S). The 60S subunit contains about 49 different proteins and 3 molecules of RNA (28S, 5.8S and 5S). Part of the small subunit (SSU) processome, composed of more than 70 proteins and the RNA chaperone small nucleolar RNA (snoRNA) U3.

Its subcellular location is the cytoplasm. The protein localises to the nucleus. It is found in the nucleolus. Its function is as follows. Component of the small ribosomal subunit. The ribosome is a large ribonucleoprotein complex responsible for the synthesis of proteins in the cell. Part of the small subunit (SSU) processome, first precursor of the small eukaryotic ribosomal subunit. During the assembly of the SSU processome in the nucleolus, many ribosome biogenesis factors, an RNA chaperone and ribosomal proteins associate with the nascent pre-rRNA and work in concert to generate RNA folding, modifications, rearrangements and cleavage as well as targeted degradation of pre-ribosomal RNA by the RNA exosome. May play a role during erythropoiesis. This chain is Small ribosomal subunit protein eS1 (rps3a), found in Tetraodon nigroviridis (Spotted green pufferfish).